A 400-amino-acid polypeptide reads, in one-letter code: Tryptophan synthase beta chain (400 aa).

Position 91 is an N6-(pyridoxal phosphate)lysine (Lys91).

The protein belongs to the TrpB family. In terms of assembly, tetramer of two alpha and two beta chains. Pyridoxal 5'-phosphate is required as a cofactor.

The enzyme catalyses (1S,2R)-1-C-(indol-3-yl)glycerol 3-phosphate + L-serine = D-glyceraldehyde 3-phosphate + L-tryptophan + H2O. It participates in amino-acid biosynthesis; L-tryptophan biosynthesis; L-tryptophan from chorismate: step 5/5. In terms of biological role, the beta subunit is responsible for the synthesis of L-tryptophan from indole and L-serine. This chain is Tryptophan synthase beta chain, found in Listeria monocytogenes serotype 4b (strain CLIP80459).